The following is a 157-amino-acid chain: Urease accessory protein UreE (157 aa).

The protein belongs to the UreE family.

Its subcellular location is the cytoplasm. Involved in urease metallocenter assembly. Binds nickel. Probably functions as a nickel donor during metallocenter assembly. The chain is Urease accessory protein UreE from Paenarthrobacter aurescens (strain TC1).